The following is a 290-amino-acid chain: Arylamine N-acetyltransferase 2 (290 aa).

Cys-68 functions as the Acyl-thioester intermediate in the catalytic mechanism. Residues Ser-103 and Gly-104 each coordinate CoA. 106 to 107 (IH) lines the substrate pocket. Catalysis depends on residues His-107 and Asp-122. Tyr-208 serves as a coordination point for CoA.

The protein belongs to the arylamine N-acetyltransferase family.

The protein resides in the cytoplasm. It carries out the reaction an arylamine + acetyl-CoA = an N-acetylarylamine + CoA. It catalyses the reaction an N-hydroxyarylamine + acetyl-CoA = an N-acetoxyarylamine + CoA. Catalyzes the N- or O-acetylation of various arylamine and heterocyclic amine substrates, and participates in the detoxification of a plethora of hydrazine and arylamine drugs. The polypeptide is Arylamine N-acetyltransferase 2 (NAT2) (Mesocricetus auratus (Golden hamster)).